A 572-amino-acid chain; its full sequence is Receptor-transporting protein 5 (572 aa).

A 3CxxC-type zinc finger spans residues 52–148; that stretch reads SRLQCGHCPG…AYEGCCEACE (97 aa). The chain crosses the membrane as a helical span at residues 544–560; that stretch reads FWIWVSMTVCVFWLMCM.

The protein localises to the membrane. In Homo sapiens (Human), this protein is Receptor-transporting protein 5 (RTP5).